Reading from the N-terminus, the 66-residue chain is Disk-determining factor A (66 aa).

Functionally, involved in cell-shape determination. Required for the formation of disks. In Haloferax volcanii (strain ATCC 29605 / DSM 3757 / JCM 8879 / NBRC 14742 / NCIMB 2012 / VKM B-1768 / DS2) (Halobacterium volcanii), this protein is Disk-determining factor A.